We begin with the raw amino-acid sequence, 490 residues long: Glutamate--tRNA ligase (490 aa).

The short motif at 12–22 is the 'HIGH' region element; the sequence is PSPTGTPHVGL. The short motif at 256–260 is the 'KMSKS' region element; that stretch reads KLSKR. Lys-259 is a binding site for ATP.

Belongs to the class-I aminoacyl-tRNA synthetase family. Glutamate--tRNA ligase type 1 subfamily. As to quaternary structure, monomer.

Its subcellular location is the cytoplasm. It carries out the reaction tRNA(Glu) + L-glutamate + ATP = L-glutamyl-tRNA(Glu) + AMP + diphosphate. In terms of biological role, catalyzes the attachment of glutamate to tRNA(Glu) in a two-step reaction: glutamate is first activated by ATP to form Glu-AMP and then transferred to the acceptor end of tRNA(Glu). This is Glutamate--tRNA ligase from Mycobacterium sp. (strain KMS).